The sequence spans 176 residues: Large ribosomal subunit protein eL20 (176 aa).

This sequence belongs to the eukaryotic ribosomal protein eL20 family. As to quaternary structure, component of the large ribosomal subunit.

Its subcellular location is the cytoplasm. Functionally, component of the large ribosomal subunit. The ribosome is a large ribonucleoprotein complex responsible for the synthesis of proteins in the cell. This is Large ribosomal subunit protein eL20 (rpl18a) from Salmo salar (Atlantic salmon).